A 277-amino-acid chain; its full sequence is Bifunctional protein FolD (277 aa).

NADP(+)-binding positions include 164 to 166, S189, and V230; that span reads GRS.

Belongs to the tetrahydrofolate dehydrogenase/cyclohydrolase family. Homodimer.

It catalyses the reaction (6R)-5,10-methylene-5,6,7,8-tetrahydrofolate + NADP(+) = (6R)-5,10-methenyltetrahydrofolate + NADPH. It carries out the reaction (6R)-5,10-methenyltetrahydrofolate + H2O = (6R)-10-formyltetrahydrofolate + H(+). The protein operates within one-carbon metabolism; tetrahydrofolate interconversion. In terms of biological role, catalyzes the oxidation of 5,10-methylenetetrahydrofolate to 5,10-methenyltetrahydrofolate and then the hydrolysis of 5,10-methenyltetrahydrofolate to 10-formyltetrahydrofolate. In Exiguobacterium sibiricum (strain DSM 17290 / CCUG 55495 / CIP 109462 / JCM 13490 / 255-15), this protein is Bifunctional protein FolD.